A 238-amino-acid chain; its full sequence is MSVLVITGTGTEVGKTVTTAAVAAVAVAAGRSVAVLKPAQTGVRPDERGDADEVARLAGAVTTLELARYPEPLAPATAARRAGLPPVGPHEVAEAAAKLAVEHDLVLVEGAGGLLVRFDDADGTLADAARLLDAPVLVVASAGLGTLNTTELTARELRRREIGFAGVVIGSWPESPDLASRCNLADLPAVAGAGLLGAIPAGAGAHSPVGFRAGAPGWLAPRLGGTWDADTFASAFVP.

Residue 12 to 17 (EVGKTV) participates in ATP binding. Threonine 16 provides a ligand contact to Mg(2+). The active site involves lysine 37. Position 41 (threonine 41) interacts with substrate. Residues aspartate 50, 109 to 112 (EGAG), 170 to 171 (GS), and 200 to 202 (PAG) each bind ATP. Mg(2+)-binding residues include aspartate 50 and glutamate 109.

It belongs to the dethiobiotin synthetase family. Homodimer. The cofactor is Mg(2+).

The protein localises to the cytoplasm. The enzyme catalyses (7R,8S)-7,8-diammoniononanoate + CO2 + ATP = (4R,5S)-dethiobiotin + ADP + phosphate + 3 H(+). The protein operates within cofactor biosynthesis; biotin biosynthesis; biotin from 7,8-diaminononanoate: step 1/2. Its function is as follows. Catalyzes a mechanistically unusual reaction, the ATP-dependent insertion of CO2 between the N7 and N8 nitrogen atoms of 7,8-diaminopelargonic acid (DAPA, also called 7,8-diammoniononanoate) to form a ureido ring. The sequence is that of ATP-dependent dethiobiotin synthetase BioD from Streptomyces avermitilis (strain ATCC 31267 / DSM 46492 / JCM 5070 / NBRC 14893 / NCIMB 12804 / NRRL 8165 / MA-4680).